Consider the following 136-residue polypeptide: Large ribosomal subunit protein uL16 (136 aa).

The protein belongs to the universal ribosomal protein uL16 family. Part of the 50S ribosomal subunit.

Functionally, binds 23S rRNA and is also seen to make contacts with the A and possibly P site tRNAs. In Serratia proteamaculans (strain 568), this protein is Large ribosomal subunit protein uL16.